The primary structure comprises 495 residues: MTTSALNPLRQPKPFYLIFSIEFWERFGFYGLQGILAVYLVKALGLREADSFTLFSSFIALVYGLIAVGGWLGDKVLGTKRTILLGALVLTAGYAMVTASSEHISLLYLGMGTIAVGNGLFKANPSSLLSKCYEENDPRLDGAFTMYYMAINIGSLLSMLATPWLADQFGYAHAFALSVVGMLITVANFILMQGWVKNYGSDADFRTPRLSTWLAVLAGVVAACAAAALLLKHEIIANVVLAVLSIGVVGLYVKETLLLKGAERKKMIVAAILMLQATVFFVLYNQMPLSLNFFAIHNTEHMLFGIPVQPEQFQSLNPFWIMLASPLLALCYNKLGNRLPMPHKFAIGMVLCAGAFLVLPLGAKYANAQGLVSSNWMVLSYLLQSVGELLISGLGLAMVAQLVPQRLMGFIMGAWFLTSAASSVIAGWVAGLTAAPDNVTNPLATLEIYSRVFTQIGVVTGVIAVVTIIIAPWLHRMTLDEKPAHPEHEMALDAR.

Over 1-20 (MTTSALNPLRQPKPFYLIFS) the chain is Cytoplasmic. A helical transmembrane segment spans residues 21–41 (IEFWERFGFYGLQGILAVYLV). Over 42 to 51 (KALGLREADS) the chain is Periplasmic. A helical membrane pass occupies residues 52–72 (FTLFSSFIALVYGLIAVGGWL). Over 73 to 81 (GDKVLGTKR) the chain is Cytoplasmic. Helical transmembrane passes span 82–102 (TILL…ASSE) and 103–123 (HISL…LFKA). At 124-145 (NPSSLLSKCYEENDPRLDGAFT) the chain is on the periplasmic side. The helical transmembrane segment at 146 to 166 (MYYMAINIGSLLSMLATPWLA) threads the bilayer. Residues 167–171 (DQFGY) are Cytoplasmic-facing. Residues 172-192 (AHAFALSVVGMLITVANFILM) traverse the membrane as a helical segment. Residues 193-209 (QGWVKNYGSDADFRTPR) lie on the Periplasmic side of the membrane. A helical transmembrane segment spans residues 210–230 (LSTWLAVLAGVVAACAAAALL). Residues 231-232 (LK) lie on the Cytoplasmic side of the membrane. The chain crosses the membrane as a helical span at residues 233–253 (HEIIANVVLAVLSIGVVGLYV). Residues 254–266 (KETLLLKGAERKK) lie on the Periplasmic side of the membrane. The helical transmembrane segment at 267–287 (MIVAAILMLQATVFFVLYNQM) threads the bilayer. Over 288 to 312 (PLSLNFFAIHNTEHMLFGIPVQPEQ) the chain is Cytoplasmic. The helical transmembrane segment at 313–333 (FQSLNPFWIMLASPLLALCYN) threads the bilayer. Residues 334–344 (KLGNRLPMPHK) lie on the Periplasmic side of the membrane. Residues 345–365 (FAIGMVLCAGAFLVLPLGAKY) traverse the membrane as a helical segment. Residues 366 to 375 (ANAQGLVSSN) lie on the Cytoplasmic side of the membrane. A helical transmembrane segment spans residues 376-396 (WMVLSYLLQSVGELLISGLGL). Over 397-409 (AMVAQLVPQRLMG) the chain is Periplasmic. A helical transmembrane segment spans residues 410–430 (FIMGAWFLTSAASSVIAGWVA). At 431–451 (GLTAAPDNVTNPLATLEIYSR) the chain is on the cytoplasmic side. A helical membrane pass occupies residues 452–472 (VFTQIGVVTGVIAVVTIIIAP). The Periplasmic portion of the chain corresponds to 473 to 495 (WLHRMTLDEKPAHPEHEMALDAR).

This sequence belongs to the major facilitator superfamily. Proton-dependent oligopeptide transporter (POT/PTR) (TC 2.A.17) family. DtpA subfamily.

It is found in the cell inner membrane. In terms of biological role, proton-dependent permease that transports di- and tripeptides. This Chromobacterium violaceum (strain ATCC 12472 / DSM 30191 / JCM 1249 / CCUG 213 / NBRC 12614 / NCIMB 9131 / NCTC 9757 / MK) protein is Dipeptide and tripeptide permease A.